Consider the following 83-residue polypeptide: Transmembrane protein EP84R (83 aa).

The next 2 helical transmembrane spans lie at 31–51 (IIGVILLVICLLFILIGIIIL) and 59–79 (AGSIFVVLSLILGGGGFFLIY).

It belongs to the asfivirus EP84R family.

The protein resides in the virion membrane. The chain is Transmembrane protein EP84R from Ornithodoros (relapsing fever ticks).